A 171-amino-acid chain; its full sequence is ATP synthase subunit b (171 aa).

A helical transmembrane segment spans residues 31-51; it reads FFVVLAIFLVVLAVIGTFVVP.

This sequence belongs to the ATPase B chain family. F-type ATPases have 2 components, F(1) - the catalytic core - and F(0) - the membrane proton channel. F(1) has five subunits: alpha(3), beta(3), gamma(1), delta(1), epsilon(1). F(0) has three main subunits: a(1), b(2) and c(10-14). The alpha and beta chains form an alternating ring which encloses part of the gamma chain. F(1) is attached to F(0) by a central stalk formed by the gamma and epsilon chains, while a peripheral stalk is formed by the delta and b chains.

Its subcellular location is the cell membrane. Its function is as follows. F(1)F(0) ATP synthase produces ATP from ADP in the presence of a proton or sodium gradient. F-type ATPases consist of two structural domains, F(1) containing the extramembraneous catalytic core and F(0) containing the membrane proton channel, linked together by a central stalk and a peripheral stalk. During catalysis, ATP synthesis in the catalytic domain of F(1) is coupled via a rotary mechanism of the central stalk subunits to proton translocation. In terms of biological role, component of the F(0) channel, it forms part of the peripheral stalk, linking F(1) to F(0). The chain is ATP synthase subunit b from Mycobacterium bovis (strain ATCC BAA-935 / AF2122/97).